Here is a 206-residue protein sequence, read N- to C-terminus: 2,3-bisphosphoglycerate-dependent phosphoglycerate mutase (206 aa).

Substrate contacts are provided by residues 9-16, 22-23, R61, 88-91, K99, 115-116, and 159-160; these read RHGQSEWN, TG, ERDY, RR, and GN. Catalysis depends on H10, which acts as the Tele-phosphohistidine intermediate. The active-site Proton donor/acceptor is the E88.

The protein belongs to the phosphoglycerate mutase family. BPG-dependent PGAM subfamily. In terms of assembly, homodimer.

The enzyme catalyses (2R)-2-phosphoglycerate = (2R)-3-phosphoglycerate. It functions in the pathway carbohydrate degradation; glycolysis; pyruvate from D-glyceraldehyde 3-phosphate: step 3/5. Its function is as follows. Catalyzes the interconversion of 2-phosphoglycerate and 3-phosphoglycerate. This is 2,3-bisphosphoglycerate-dependent phosphoglycerate mutase from Methylocella silvestris (strain DSM 15510 / CIP 108128 / LMG 27833 / NCIMB 13906 / BL2).